A 233-amino-acid polypeptide reads, in one-letter code: Protein FAM204A (233 aa).

The tract at residues 1-126 (MWSGLLPPGL…HSEPSSNETQ (126 aa)) is disordered. The segment covering 13–24 (SDAESNSEDEAT) has biased composition (acidic residues). The segment covering 39–58 (ESIRKTEIIDFSTDEPKTET) has biased composition (basic and acidic residues). The segment covering 97-109 (FRGKRRKRSRKDK) has biased composition (basic residues). A coiled-coil region spans residues 144–164 (VKRKKVEKSGLEKRIDQAVEE).

The sequence is that of Protein FAM204A (FAM204A) from Homo sapiens (Human).